Consider the following 314-residue polypeptide: Methionyl-tRNA formyltransferase (314 aa).

(6S)-5,6,7,8-tetrahydrofolate is bound at residue 110-113 (SLLP).

Belongs to the Fmt family.

The enzyme catalyses L-methionyl-tRNA(fMet) + (6R)-10-formyltetrahydrofolate = N-formyl-L-methionyl-tRNA(fMet) + (6S)-5,6,7,8-tetrahydrofolate + H(+). Its function is as follows. Attaches a formyl group to the free amino group of methionyl-tRNA(fMet). The formyl group appears to play a dual role in the initiator identity of N-formylmethionyl-tRNA by promoting its recognition by IF2 and preventing the misappropriation of this tRNA by the elongation apparatus. This chain is Methionyl-tRNA formyltransferase, found in Lactobacillus gasseri (strain ATCC 33323 / DSM 20243 / BCRC 14619 / CIP 102991 / JCM 1131 / KCTC 3163 / NCIMB 11718 / NCTC 13722 / AM63).